The following is a 366-amino-acid chain: Protein disulfide isomerase-like 2-1 (366 aa).

A signal peptide spans 1–29; that stretch reads MATPQISRKALASLLLLVAAAAAVSTASA. Thioredoxin domains are found at residues 30-138 and 139-257; these read DDVL…SEAA and TNVK…EKCG. Active-site nucleophile residues include C59, C62, C178, and C181. 2 disulfides stabilise this stretch: C59-C62 and C178-C181.

This sequence belongs to the protein disulfide isomerase family.

The protein resides in the secreted. The catalysed reaction is Catalyzes the rearrangement of -S-S- bonds in proteins.. In terms of biological role, acts as a protein-folding catalyst that interacts with nascent polypeptides to catalyze the formation, isomerization, and reduction or oxidation of disulfide bonds. May play a role in storage protein biogenesis. This Oryza sativa subsp. japonica (Rice) protein is Protein disulfide isomerase-like 2-1 (PDIL2-1).